A 304-amino-acid chain; its full sequence is MDSYGDTSGRIGRDWLDRHDEELEQELLDDELNLDELFGPEQEDAPGELSRRRYFRELFRLQRELVKLQNWVVHTGHKVVILFEGRDAAGKGGVIKRITQRLNPRVCRVAALPAPNDREQTQWYFQRYVSHLPAGGEIVLFDRSWYNRAGVERVMGFCNDEQYEEFFRSVPEFEKMLARSGIQLLKYWFSISDAEQHLRFLSRIHDPLKQWKLSPMDLESRRRWEAYTKAKETMLERTHIPEAPWWVVQADDKKRARLNCIHHLLQQMPYREVPQPPVHLPERLRHADYVRHPTPGEIIVPEVY.

Belongs to the polyphosphate kinase 2 (PPK2) family. Class I subfamily.

It carries out the reaction [phosphate](n) + ATP = [phosphate](n+1) + ADP. In terms of biological role, uses inorganic polyphosphate (polyP) as a donor to convert ADP to ATP. In Pseudomonas aeruginosa (strain ATCC 15692 / DSM 22644 / CIP 104116 / JCM 14847 / LMG 12228 / 1C / PRS 101 / PAO1), this protein is ADP-polyphosphate phosphotransferase.